The following is a 481-amino-acid chain: Aspartyl/glutamyl-tRNA(Asn/Gln) amidotransferase subunit B (481 aa).

The protein belongs to the GatB/GatE family. GatB subfamily. Heterotrimer of A, B and C subunits.

The enzyme catalyses L-glutamyl-tRNA(Gln) + L-glutamine + ATP + H2O = L-glutaminyl-tRNA(Gln) + L-glutamate + ADP + phosphate + H(+). It catalyses the reaction L-aspartyl-tRNA(Asn) + L-glutamine + ATP + H2O = L-asparaginyl-tRNA(Asn) + L-glutamate + ADP + phosphate + 2 H(+). Functionally, allows the formation of correctly charged Asn-tRNA(Asn) or Gln-tRNA(Gln) through the transamidation of misacylated Asp-tRNA(Asn) or Glu-tRNA(Gln) in organisms which lack either or both of asparaginyl-tRNA or glutaminyl-tRNA synthetases. The reaction takes place in the presence of glutamine and ATP through an activated phospho-Asp-tRNA(Asn) or phospho-Glu-tRNA(Gln). The polypeptide is Aspartyl/glutamyl-tRNA(Asn/Gln) amidotransferase subunit B (Ehrlichia chaffeensis (strain ATCC CRL-10679 / Arkansas)).